The sequence spans 717 residues: Proline-rich receptor-like protein kinase PERK2 (717 aa).

Positions 1–197 (MSSAPPPGGT…GSLSPPPPAS (197 aa)) are enriched in pro residues. Residues 1 to 221 (MSSAPPPGGT…GSSPPAQSSK (221 aa)) are disordered. Residues 1–228 (MSSAPPPGGT…SSKELSKGAM (228 aa)) are Extracellular-facing. Positions 198 to 220 (PSGGRSPSTPSTTPGSSPPAQSS) are enriched in low complexity. Residues 229-249 (VGIAIGGGFVLLVALALIFFL) traverse the membrane as a helical segment. The Cytoplasmic segment spans residues 250–717 (CKKKRRRDNE…NIKRPGQGYG (468 aa)). The tract at residues 258–323 (NEAPPAPIDG…YDSNYSDQSV (66 aa)) is disordered. Positions 289-303 (VPPPKSPSSAPPRPP) are enriched in pro residues. The span at 307-322 (SSGSSGDYDSNYSDQS) shows a compositional bias: low complexity. Residues 354–631 (FSEANLLGQG…QVARVLEGNI (278 aa)) enclose the Protein kinase domain. Residues 360–368 (LGQGGFGYV) and lysine 382 contribute to the ATP site. Residue aspartate 478 is the Proton acceptor of the active site. 2 stretches are compositionally biased toward polar residues: residues 632-644 (SPSD…TPGH) and 692-705 (SWSS…QGKA). Disordered stretches follow at residues 632–665 (SPSD…DNEG) and 690–717 (YPSW…QGYG).

Belongs to the protein kinase superfamily. Ser/Thr protein kinase family. As to expression, mostly expressed in inflorescence bolt, flower buds and siliques, and, to a lower extent, in roots, seedlings and leaves.

Its subcellular location is the cell membrane. The enzyme catalyses L-seryl-[protein] + ATP = O-phospho-L-seryl-[protein] + ADP + H(+). It carries out the reaction L-threonyl-[protein] + ATP = O-phospho-L-threonyl-[protein] + ADP + H(+). The polypeptide is Proline-rich receptor-like protein kinase PERK2 (PERK2) (Arabidopsis thaliana (Mouse-ear cress)).